Reading from the N-terminus, the 178-residue chain is uncharacterized protein (178 aa).

4 helical membrane-spanning segments follow: residues 29–49 (AATGFCGGVLWSFVAYIAYLF), 76–96 (VISIILIGVISIGAAFLYFLL), 105–125 (PGILYGLVLWLLVFFVFNPIF), and 139–159 (IITTICIYLLYGLFVGYSISF).

The protein localises to the cell membrane. This is an uncharacterized protein from Bacillus subtilis (strain 168).